Here is a 168-residue protein sequence, read N- to C-terminus: Photosystem I assembly protein Ycf3 (168 aa).

3 TPR repeats span residues 35-68, 72-105, and 120-153; these read AFAYYINGMSAQSEGNYAEALQNYYQAMHLEMDP, SYILYNIGIIHTSNGEHSKALEYYCRAIERNPFL, and GEQAIQQGDSEIAEAWFDQAAEYWKQARTLTPDN.

It belongs to the Ycf3 family.

It is found in the plastid membrane. Functionally, essential for the assembly of the photosystem I (PSI) complex. May act as a chaperone-like factor to guide the assembly of the PSI subunits. The polypeptide is Photosystem I assembly protein Ycf3 (Cuscuta obtusiflora (Peruvian dodder)).